Here is an 829-residue protein sequence, read N- to C-terminus: Disintegrin and metalloproteinase domain-containing protein 23 (829 aa).

The first 55 residues, 1-55 (MKPPGSISRRPTLTGCSLPGASCGPGRCPAGPVPARAPPCRLLLVLLLLPALATS), serve as a signal peptide directing secretion. A propeptide spanning residues 56–283 (SRPRARGAAA…ELQWLRRRKR (228 aa)) is cleaved from the precursor. 4 N-linked (GlcNAc...) asparagine glycosylation sites follow: Asn-72, Asn-92, Asn-97, and Asn-260. Topologically, residues 284–789 (AVNPSRGVFE…EGPKGPSATN (506 aa)) are extracellular. Residues 296 to 493 (KYLELMIVND…GGGACLFNRP (198 aa)) enclose the Peptidase M12B domain. Intrachain disulfides connect Cys-405–Cys-488, Cys-447–Cys-472, and Cys-449–Cys-456. A Disintegrin domain is found at 499-585 (PTECGNGYVE…QCPPNLHKQD (87 aa)). N-linked (GlcNAc...) asparagine glycans are attached at residues Asn-544 and Asn-545. A disulfide bridge connects residues Cys-557 and Cys-577. N-linked (GlcNAc...) asparagine glycans are attached at residues Asn-661 and Asn-729. Residues 729 to 766 (NMSSCPLDSRGKVCSGHGVCSNEATCICDFTWAGTDCS) form the EGF-like domain. 3 disulfides stabilise this stretch: Cys-733-Cys-748, Cys-742-Cys-754, and Cys-756-Cys-765. Residues 790–810 (LIIGSIAGAILVAAIVLGGTG) form a helical membrane-spanning segment. Over 811 to 829 (WGFKNVKKRRFDPTQQGPI) the chain is Cytoplasmic.

As to quaternary structure, can bind to LGI1 and LGI4. As to expression, brain specific.

The protein localises to the cell membrane. Its subcellular location is the secreted. May play a role in cell-cell and cell-matrix interactions. This is a non-catalytic metalloprotease-like protein. This chain is Disintegrin and metalloproteinase domain-containing protein 23 (Adam23), found in Mus musculus (Mouse).